We begin with the raw amino-acid sequence, 335 residues long: GTPase Obg (335 aa).

The 158-residue stretch at 1–158 (MFLDQITIEL…RQVELELKLI (158 aa)) folds into the Obg domain. Positions 159-334 (ADIGLVGFPN…LNSLFTNKLA (176 aa)) constitute an OBG-type G domain. GTP contacts are provided by residues 165 to 172 (GFPNAGKS), 190 to 194 (FTTLQ), 215 to 218 (DIPG), 285 to 288 (NKID), and 315 to 317 (SGL). Residues Ser-172 and Thr-192 each coordinate Mg(2+).

It belongs to the TRAFAC class OBG-HflX-like GTPase superfamily. OBG GTPase family. As to quaternary structure, monomer. Mg(2+) serves as cofactor.

The protein localises to the cytoplasm. Its function is as follows. An essential GTPase (4.1 pmol GTP/min). Cannot substitute endogenous obg in E.coli, has a partially dominant-negative phenotype upon overexpression in liquid culture leading to decreased growth rate in a concentration-dependent fashion, with 50% of cells being elongated. Binds GTP, GDP and possibly (p)ppGpp with moderate affinity, with high nucleotide exchange rates and a fairly low GTP hydrolysis rate. It may play a role in control of the cell cycle, stress response, ribosome biogenesis and in those bacteria that undergo differentiation, in morphogenesis control. The protein is GTPase Obg of Chlamydia abortus (strain DSM 27085 / S26/3) (Chlamydophila abortus).